A 311-amino-acid chain; its full sequence is Probable manganese-dependent inorganic pyrophosphatase (311 aa).

His-9, Asp-13, Asp-15, Asp-77, His-99, and Asp-151 together coordinate Mn(2+).

This sequence belongs to the PPase class C family. The cofactor is Mn(2+).

The protein resides in the cytoplasm. It catalyses the reaction diphosphate + H2O = 2 phosphate + H(+). The sequence is that of Probable manganese-dependent inorganic pyrophosphatase from Streptococcus pyogenes serotype M1.